The following is a 262-amino-acid chain: Ankyrin repeat domain-containing protein 7 (262 aa).

ANK repeat units lie at residues Lys-67–Ile-96, Glu-100–Leu-129, Arg-133–Ala-162, Asp-166–Ala-195, and Tyr-199–Cys-228.

The sequence is that of Ankyrin repeat domain-containing protein 7 (ANKRD7) from Macaca fascicularis (Crab-eating macaque).